Here is a 205-residue protein sequence, read N- to C-terminus: Urease accessory protein UreG (205 aa).

Residue 10-17 (GPVGAGKT) coordinates GTP.

The protein belongs to the SIMIBI class G3E GTPase family. UreG subfamily. As to quaternary structure, homodimer. UreD, UreF and UreG form a complex that acts as a GTP-hydrolysis-dependent molecular chaperone, activating the urease apoprotein by helping to assemble the nickel containing metallocenter of UreC. The UreE protein probably delivers the nickel.

The protein resides in the cytoplasm. In terms of biological role, facilitates the functional incorporation of the urease nickel metallocenter. This process requires GTP hydrolysis, probably effectuated by UreG. The polypeptide is Urease accessory protein UreG (Corynebacterium glutamicum (strain ATCC 13032 / DSM 20300 / JCM 1318 / BCRC 11384 / CCUG 27702 / LMG 3730 / NBRC 12168 / NCIMB 10025 / NRRL B-2784 / 534)).